The following is a 512-amino-acid chain: Maturase K (512 aa).

Belongs to the intron maturase 2 family. MatK subfamily.

It is found in the plastid. It localises to the chloroplast. Usually encoded in the trnK tRNA gene intron. Probably assists in splicing its own and other chloroplast group II introns. The chain is Maturase K from Lilium canadense (Canada lily).